Here is a 72-residue protein sequence, read N- to C-terminus: MLALTRKKGESLVINNDIEITILEIRGDQIKLGVSAPKEVPIYRKEVYTQIQQENRKSADAQNAQALKELFG.

This sequence belongs to the CsrA/RsmA family. As to quaternary structure, homodimer; the beta-strands of each monomer intercalate to form a hydrophobic core, while the alpha-helices form wings that extend away from the core.

It is found in the cytoplasm. Its function is as follows. A translational regulator that binds mRNA to regulate translation initiation and/or mRNA stability. Usually binds in the 5'-UTR at or near the Shine-Dalgarno sequence preventing ribosome-binding, thus repressing translation. Its main target seems to be the major flagellin gene, while its function is anatagonized by FliW. The protein is Translational regulator CsrA of Agathobacter rectalis (strain ATCC 33656 / DSM 3377 / JCM 17463 / KCTC 5835 / VPI 0990) (Eubacterium rectale).